Reading from the N-terminus, the 262-residue chain is Tritrans,polycis-undecaprenyl-diphosphate synthase (geranylgeranyl-diphosphate specific) (262 aa).

D40 is a catalytic residue. D40 is a binding site for Mg(2+). Residues 41 to 44, W45, and 85 to 87 contribute to the substrate site; these read GNRR and STE. Catalysis depends on N88, which acts as the Proton acceptor. Residues R92, R211, and 217 to 219 contribute to the substrate site; that span reads RIS. Mg(2+) is bound at residue E230.

Belongs to the UPP synthase family. In terms of assembly, homodimer. Mg(2+) is required as a cofactor.

It carries out the reaction geranylgeranyl diphosphate + 7 isopentenyl diphosphate = tri-trans,hepta-cis-undecaprenyl diphosphate + 7 diphosphate. Functionally, catalyzes the sequential condensation of isopentenyl diphosphate (IPP) with geranylgeranyl diphosphate (GGPP) to yield (2Z,6Z,10Z,14Z,18Z,22Z,26Z,30E,34E,38E)-undecaprenyl diphosphate (tritrans,heptacis-UPP). It is probably the precursor of glycosyl carrier lipids. This Sulfurisphaera tokodaii (strain DSM 16993 / JCM 10545 / NBRC 100140 / 7) (Sulfolobus tokodaii) protein is Tritrans,polycis-undecaprenyl-diphosphate synthase (geranylgeranyl-diphosphate specific).